Consider the following 347-residue polypeptide: NADH-ubiquinone oxidoreductase chain 2 (347 aa).

The next 11 helical transmembrane spans lie at 1 to 21 (MNPL…VIVM), 25 to 45 (HWLT…PMLM), 59 to 79 (YFLT…INLT), 96 to 116 (IIMT…FWVP), 127 to 147 (CLIL…MISP), 149 to 169 (INLN…GWGG), 178 to 198 (IMAY…AYNP), 200 to 220 (MTML…MLLI), 237 to 257 (IPLV…LPPL), 276 to 296 (IILP…YMRL), and 325 to 345 (LLSP…TMLL).

The protein belongs to the complex I subunit 2 family. As to quaternary structure, core subunit of respiratory chain NADH dehydrogenase (Complex I) which is composed of 45 different subunits. Interacts with TMEM242.

The protein localises to the mitochondrion inner membrane. It catalyses the reaction a ubiquinone + NADH + 5 H(+)(in) = a ubiquinol + NAD(+) + 4 H(+)(out). Functionally, core subunit of the mitochondrial membrane respiratory chain NADH dehydrogenase (Complex I) which catalyzes electron transfer from NADH through the respiratory chain, using ubiquinone as an electron acceptor. Essential for the catalytic activity and assembly of complex I. The sequence is that of NADH-ubiquinone oxidoreductase chain 2 from Natalus tumidirostris (Trinidadian funnel-eared bat).